Consider the following 232-residue polypeptide: Ashwin (232 aa).

A phosphoserine mark is found at Ser-112, Ser-182, Ser-184, Ser-189, and Ser-193. Residues 163-232 (KMEHNNNDTQ…KRKIQHVTWP (70 aa)) form a disordered region. Phosphothreonine occurs at positions 197 and 198. The segment covering 206-224 (APKEEAEATNHLKPPEVKR) has biased composition (basic and acidic residues).

The protein belongs to the ashwin family. As to quaternary structure, component of the tRNA-splicing ligase complex.

It is found in the nucleus. This Mus musculus (Mouse) protein is Ashwin.